We begin with the raw amino-acid sequence, 401 residues long: Tyrosine--tRNA ligase (401 aa).

Residues 42–51 carry the 'HIGH' region motif; sequence PTAPDLHLGH. The 'KMSKS' region signature appears at 226-230; sequence KMSKS. Lysine 229 contacts ATP. The region spanning 336–397 is the S4 RNA-binding domain; that stretch reads IALAQLLKQI…GKRRIAKLSI (62 aa).

Belongs to the class-I aminoacyl-tRNA synthetase family. TyrS type 2 subfamily. As to quaternary structure, homodimer.

The protein localises to the cytoplasm. It carries out the reaction tRNA(Tyr) + L-tyrosine + ATP = L-tyrosyl-tRNA(Tyr) + AMP + diphosphate + H(+). Catalyzes the attachment of tyrosine to tRNA(Tyr) in a two-step reaction: tyrosine is first activated by ATP to form Tyr-AMP and then transferred to the acceptor end of tRNA(Tyr). This Legionella pneumophila (strain Lens) protein is Tyrosine--tRNA ligase.